Reading from the N-terminus, the 197-residue chain is Transcription factor FapR (197 aa).

This sequence belongs to the FapR family.

In terms of biological role, transcriptional factor involved in regulation of membrane lipid biosynthesis by repressing genes involved in fatty acid and phospholipid metabolism. The sequence is that of Transcription factor FapR from Bacillus cereus (strain B4264).